The sequence spans 180 residues: Centromere protein M (180 aa).

In terms of assembly, component of the CENPA-NAC complex, at least composed of CENPA, CENPC, CENPH, CENPM, CENPN, CENPT and CENPU. The CENPA-NAC complex interacts with the CENPA-CAD complex, composed of CENPI, CENPK, CENPL, CENPO, CENPP, CENPQ, CENPR and CENPS. In terms of tissue distribution, isoform 3 is highly expressed in spleen, and intermediately in heart, prostate and ovary. Isoform 3 is highly expressed in resting CD19 B-cells and B-lineage chronic lymphocytic leukemia (B-CLL) cells and weakly expressed in activated B-cells. Isoform 1 is selectively expressed in activated CD19 cells and weakly in resting CD19 B-cells.

It localises to the nucleus. The protein localises to the cytoplasm. The protein resides in the chromosome. Its subcellular location is the centromere. It is found in the kinetochore. Its function is as follows. Component of the CENPA-NAC (nucleosome-associated) complex, a complex that plays a central role in assembly of kinetochore proteins, mitotic progression and chromosome segregation. The CENPA-NAC complex recruits the CENPA-CAD (nucleosome distal) complex and may be involved in incorporation of newly synthesized CENPA into centromeres. This chain is Centromere protein M (CENPM), found in Homo sapiens (Human).